The primary structure comprises 692 residues: Elongation factor G (692 aa).

Residues 8–282 enclose the tr-type G domain; it reads AKTRNIGIMA…AVIAYLPSPL (275 aa). GTP is bound by residues 17–24, 81–85, and 135–138; these read AHVDAGKT, DTPGH, and NKMD.

It belongs to the TRAFAC class translation factor GTPase superfamily. Classic translation factor GTPase family. EF-G/EF-2 subfamily.

The protein localises to the cytoplasm. Functionally, catalyzes the GTP-dependent ribosomal translocation step during translation elongation. During this step, the ribosome changes from the pre-translocational (PRE) to the post-translocational (POST) state as the newly formed A-site-bound peptidyl-tRNA and P-site-bound deacylated tRNA move to the P and E sites, respectively. Catalyzes the coordinated movement of the two tRNA molecules, the mRNA and conformational changes in the ribosome. This is Elongation factor G from Streptococcus equi subsp. zooepidemicus (strain MGCS10565).